Here is an 84-residue protein sequence, read N- to C-terminus: MPLAKDPLHPSPEEEKRKHKKKRLVQSPNSYFMDVKCPGCYKITTVFSHAQTVVLCVGCSTVLCQPTGGKARLTEGCSFRRKQH.

Positions 1-16 are enriched in basic and acidic residues; that stretch reads MPLAKDPLHPSPEEEK. The disordered stretch occupies residues 1–25; it reads MPLAKDPLHPSPEEEKRKHKKKRLV. S11 is subject to Phosphoserine. The C4-type zinc finger occupies 38 to 60; the sequence is PGCYKITTVFSHAQTVVLCVGCS.

Belongs to the eukaryotic ribosomal protein eS27 family. Component of the small ribosomal subunit. Part of the small subunit (SSU) processome, composed of more than 70 proteins and the RNA chaperone small nucleolar RNA (snoRNA) U3. It depends on Zn(2+) as a cofactor.

The protein resides in the cytoplasm. Its subcellular location is the nucleus. It localises to the nucleolus. Its function is as follows. Component of the small ribosomal subunit. The ribosome is a large ribonucleoprotein complex responsible for the synthesis of proteins in the cell. Required for proper rRNA processing and maturation of 18S rRNAs. Part of the small subunit (SSU) processome, first precursor of the small eukaryotic ribosomal subunit. During the assembly of the SSU processome in the nucleolus, many ribosome biogenesis factors, an RNA chaperone and ribosomal proteins associate with the nascent pre-rRNA and work in concert to generate RNA folding, modifications, rearrangements and cleavage as well as targeted degradation of pre-ribosomal RNA by the RNA exosome. The polypeptide is Small ribosomal subunit protein eS27 (RPS27) (Pongo abelii (Sumatran orangutan)).